The following is a 750-amino-acid chain: Rho GTPase-activating protein 9 (750 aa).

An SH3 domain is found at 22 to 88 (PRGSQLCALY…PAAYMIEESI (67 aa)). 2 disordered regions span residues 120 to 187 (ALPS…LMSE) and 242 to 319 (WKPP…LLDD). A compositionally biased stretch (polar residues) spans 163 to 180 (RSLSQEDLPSEASASTAG). One can recognise a WW domain in the interval 213–247 (LQRLDAWEQHLDPNSGRCFYINSLTGCKSWKPPRR). Composition is skewed to polar residues over residues 251-270 (ETNP…NDVL) and 291-300 (GSLSLSQRTS). Residues 301 to 317 (QLDPPALQAPRPLPQLL) are compositionally biased toward low complexity. In terms of domain architecture, PH spans 322–435 (EVEKSGLLNM…WHRALRTVIE (114 aa)). Lipid binding stretches follow at residues 342–345 (RKNW), 397–399 (SSR), and 432–669 (TVIE…CLSQ). Residues 446–462 (EAPTGRDQGSGDRENPL) are compositionally biased toward basic and acidic residues. Residues 446-488 (EAPTGRDQGSGDRENPLELRLSGSGPAELSAGEDEEEESELVS) are disordered. Phosphoserine is present on serine 475. Residues 476-485 (AGEDEEEESE) show a composition bias toward acidic residues. Serine 500 bears the Phosphoserine mark. Residues 542–749 (CQLESLCQRE…LMLTNFTSLF (208 aa)) enclose the Rho-GAP domain.

Interacts with FASLG. As to expression, predominantly expressed in peripheral blood leukocytes, spleen, and thymus.

In terms of biological role, GTPase activator for the Rho-type GTPases by converting them to an inactive GDP-bound state. Has a substantial GAP activity toward CDC42 and RAC1 and less toward RHOA. Has a role in regulating adhesion of hematopoietic cells to the extracellular matrix. Binds phosphoinositides, and has the highest affinity for phosphatidylinositol 3,4,5-trisphosphate, followed by phosphatidylinositol 3,4-bisphosphate and phosphatidylinositol 4,5-bisphosphate. The protein is Rho GTPase-activating protein 9 (ARHGAP9) of Homo sapiens (Human).